The chain runs to 523 residues: Cytochrome P450 52-N1 (523 aa).

A helical membrane pass occupies residues 5–25; the sequence is AVLGAFAAFLLYMDVLYPFVI. Residue C469 participates in heme binding.

This sequence belongs to the cytochrome P450 family. Heme is required as a cofactor.

It localises to the membrane. It carries out the reaction an omega-methyl-long-chain fatty acid + reduced [NADPH--hemoprotein reductase] + O2 = an omega-hydroxy-long-chain fatty acid + oxidized [NADPH--hemoprotein reductase] + H2O + H(+). The catalysed reaction is (9Z,12Z)-octadecadienoate + reduced [NADPH--hemoprotein reductase] + O2 = 18-hydroxy-(9Z,12Z)-octadecadienoate + oxidized [NADPH--hemoprotein reductase] + H2O + H(+). The enzyme catalyses (9Z)-octadecenoate + reduced [NADPH--hemoprotein reductase] + O2 = 18-hydroxy-(9Z)-octadecenoate + oxidized [NADPH--hemoprotein reductase] + H2O + H(+). It catalyses the reaction hexadecanoate + reduced [NADPH--hemoprotein reductase] + O2 = 16-hydroxyhexadecanoate + oxidized [NADPH--hemoprotein reductase] + H2O + H(+). It carries out the reaction (9Z)-hexadecenoate + reduced [NADPH--hemoprotein reductase] + O2 = (9Z)-16-hydroxyhexadec-9-enoate + oxidized [NADPH--hemoprotein reductase] + H2O + H(+). The catalysed reaction is octadecanoate + reduced [NADPH--hemoprotein reductase] + O2 = 18-hydroxyoctadecanoate + oxidized [NADPH--hemoprotein reductase] + H2O + H(+). Catalyzes the terminal (at the omega-position) hydroxylation of a fatty acid. Probably involved in alkane metabolism. Linoleic acid is the preferred substrate, but it acts on various other C-16, C-18 and C-20 saturated and unsaturated fatty acids, namely palmitic, palmitoleic, stearic, oleic, alpha-linoleic, arachidonic and myristic acid. The sequence is that of Cytochrome P450 52-N1 from Starmerella bombicola (Yeast).